The following is a 322-amino-acid chain: UDP-N-acetylenolpyruvoylglucosamine reductase (322 aa).

The FAD-binding PCMH-type domain occupies 36 to 202; it reads RAGGPAQVLF…TSVLFEGVPG (167 aa). R182 is a catalytic residue. The active-site Proton donor is the S231. Residue E301 is part of the active site.

Belongs to the MurB family. It depends on FAD as a cofactor.

Its subcellular location is the cytoplasm. The catalysed reaction is UDP-N-acetyl-alpha-D-muramate + NADP(+) = UDP-N-acetyl-3-O-(1-carboxyvinyl)-alpha-D-glucosamine + NADPH + H(+). It functions in the pathway cell wall biogenesis; peptidoglycan biosynthesis. Its function is as follows. Cell wall formation. The sequence is that of UDP-N-acetylenolpyruvoylglucosamine reductase from Brucella suis (strain ATCC 23445 / NCTC 10510).